The chain runs to 539 residues: Putative cysteine ligase BshC (539 aa).

ADP contacts are provided by residues Ser-146 and 384 to 386; that span reads ERH. Residues 455–475 are a coiled coil; sequence LLKNAAFIQDQLQFLERTVMK. ADP is bound by residues 490 to 493, Trp-506, and Tyr-510; that span reads RIQN.

The protein belongs to the BshC family. In terms of assembly, homodimer in solution.

Its function is as follows. Involved in bacillithiol (BSH) biosynthesis. May catalyze the last step of the pathway, the addition of cysteine to glucosamine malate (GlcN-Mal) to generate BSH. The polypeptide is Putative cysteine ligase BshC (Bacillus subtilis (strain 168)).